Reading from the N-terminus, the 20-residue chain is Fibrinolytic zinc metalloproteinase (20 aa).

Positions 7–20 (RYVQLVITVDHVMN) constitute a Peptidase M12B domain.

Zn(2+) is required as a cofactor.

The protein resides in the secreted. In terms of biological role, hydrolyzes alpha and beta chains of human fibrinogen and human fibrin. No activity against the gamma chain of human fibrinogen, human thrombin, bovine serum albumin, ovalbumin and hemoglobin. Has anticoagulant activity on human plasma and protects mice against death due from experimentally induced platelet thromboembolism with an ED(50) of 40 ug/kg. The protein is Fibrinolytic zinc metalloproteinase of Ganoderma lucidum (Ling zhi medicinal fungus).